Reading from the N-terminus, the 262-residue chain is Acyl-[acyl-carrier-protein]--UDP-N-acetylglucosamine O-acyltransferase (262 aa).

The protein belongs to the transferase hexapeptide repeat family. LpxA subfamily. Homotrimer.

Its subcellular location is the cytoplasm. The enzyme catalyses a (3R)-hydroxyacyl-[ACP] + UDP-N-acetyl-alpha-D-glucosamine = a UDP-3-O-[(3R)-3-hydroxyacyl]-N-acetyl-alpha-D-glucosamine + holo-[ACP]. Its pathway is glycolipid biosynthesis; lipid IV(A) biosynthesis; lipid IV(A) from (3R)-3-hydroxytetradecanoyl-[acyl-carrier-protein] and UDP-N-acetyl-alpha-D-glucosamine: step 1/6. Its function is as follows. Involved in the biosynthesis of lipid A, a phosphorylated glycolipid that anchors the lipopolysaccharide to the outer membrane of the cell. In Aliivibrio salmonicida (strain LFI1238) (Vibrio salmonicida (strain LFI1238)), this protein is Acyl-[acyl-carrier-protein]--UDP-N-acetylglucosamine O-acyltransferase.